Here is a 1958-residue protein sequence, read N- to C-terminus: Echinoderm microtubule-associated protein-like 6 (1958 aa).

WD repeat units lie at residues 59–100, 104–145, 148–187, 195–233, 235–273, 280–321, 323–362, 364–403, 406–445, and 561–601; these read GHND…TVSI, VHTH…LLAS, GHSD…LTAK, GDLQ…RTIQ, AHSA…TKID, GYKG…LILQ, HCEG…LIAR, NMEE…EVVH, DRKE…KKIG, and GHSA…VSNG. Residues 604-627 form a disordered region; sequence ETTPQEGGADSYSEESDSDFSDVP. Acidic residues predominate over residues 615-627; it reads YSEESDSDFSDVP. WD repeat units follow at residues 725–766, 770–811, 814–853, 861–900, 901–940, 996–1035, 1038–1077, 1080–1120, 1191–1230, and 1236–1276; these read GHDD…CLSL, HHQR…KIAT, GHKD…FTSK, GKLE…KTVK, AHDG…KTYA, HMEG…RMLA, KLKK…DMLS, HRKE…RVGI, SDVT…QHAR, and GHSA…TQES. The segment covering 1322-1337 has biased composition (basic and acidic residues); the sequence is KPHQQLKEVSMEERPP. The disordered stretch occupies residues 1322-1352; the sequence is KPHQQLKEVSMEERPPVSRAAPQPEKLQKNN. WD repeat units follow at residues 1412–1456, 1460–1501, 1504–1543, 1553–1591, 1593–1638, 1685–1724, 1726–1767, 1768–1807, 1880–1919, and 1925–1958; these read EHTD…TLSM, FHTK…KVAS, GHLE…LLYK, AKMQ…RLVA, AHTG…CRAF, HMEG…LLNK, NLGH…GKKR, DRKS…SLNR, ADKA…KFAK, and GHSA…WRCL.

It belongs to the WD repeat EMAP family.

It localises to the cytoplasm. It is found in the cytoskeleton. Functionally, may modify the assembly dynamics of microtubules, such that microtubules are slightly longer, but more dynamic. The chain is Echinoderm microtubule-associated protein-like 6 (Eml6) from Mus musculus (Mouse).